A 3343-amino-acid polypeptide reads, in one-letter code: Cadherin-3 (3343 aa).

An N-terminal signal peptide occupies residues 1–26 (MTIRIFFSIFLLNHLIFFHLFNFTHQ). N-linked (GlcNAc...) asparagine glycosylation is present at Asn-22. Residues 27-3228 (FSEETIKFSV…LFSNFSNTTT (3202 aa)) lie on the Extracellular side of the membrane. 3 Cadherin domains span residues 28–117 (SEET…SPIF), 118–229 (PIDV…PPNF), and 242–330 (PNTK…EPNI). N-linked (GlcNAc...) asparagine glycans are attached at residues Asn-149, Asn-250, Asn-288, Asn-369, Asn-467, and Asn-612. A Cadherin 4 domain is found at 632-738 (ICQITEIHVL…EDVNDNVPKF (107 aa)). N-linked (GlcNAc...) asparagine glycans are attached at residues Asn-752, Asn-806, Asn-941, Asn-966, Asn-970, Asn-985, Asn-1042, Asn-1335, Asn-1425, Asn-1429, Asn-1557, Asn-1563, Asn-1597, Asn-1624, Asn-1695, and Asn-1702. One can recognise a Cadherin 5 domain in the interval 1279 to 1368 (RENELMFEIE…ADVNDNKPKI (90 aa)). Cadherin domains are found at residues 1545 to 1648 (DKAA…APRF), 1676 to 1756 (AEDL…TPEF), and 1757 to 1857 (ELSS…HPMI). 2 N-linked (GlcNAc...) asparagine glycosylation sites follow: Asn-1895 and Asn-1900. 3 Cadherin domains span residues 1954 to 2045 (TVSV…SPRF), 2046 to 2145 (DQQL…NAPR), and 2146 to 2245 (FSRI…APIF). Asn-2053, Asn-2129, Asn-2203, Asn-2382, Asn-2391, Asn-2410, Asn-2414, Asn-2431, Asn-2527, Asn-2530, Asn-2564, Asn-2621, Asn-2665, Asn-2712, Asn-2798, Asn-2809, Asn-2927, Asn-2976, and Asn-3045 each carry an N-linked (GlcNAc...) asparagine glycan. Positions 3040-3205 (EISVRNGTSH…SSTGTSRNEC (166 aa)) constitute a Laminin G-like domain. Cys-3172 and Cys-3205 are joined by a disulfide. 2 N-linked (GlcNAc...) asparagine glycosylation sites follow: Asn-3222 and Asn-3225. Residues 3229-3250 (LILLITLALISLIGFSVCLLAI) traverse the membrane as a helical segment. Topologically, residues 3251–3343 (RRRWRQKSPG…RDGHINMAYL (93 aa)) are cytoplasmic. The segment at 3257 to 3277 (KSPGDQKQTERSNGWTGHVMP) is disordered.

In terms of tissue distribution, expressed in the anchor cell.

It localises to the cell membrane. It is found in the basolateral cell membrane. Its subcellular location is the cell junction. Cell adhesion protein involved in the control of epithelial morphogenesis. Together with metalloproteinase zmp-1 and hemicentin him-4, plays a role in anchor cell (AC) invasion during postembryonic vulval development. The protein is Cadherin-3 (cdh-3) of Caenorhabditis elegans.